A 459-amino-acid chain; its full sequence is Putrescine aminotransferase (459 aa).

Residues 150 to 151 (GT) and Gln274 contribute to the pyridoxal 5'-phosphate site. Lys300 bears the N6-(pyridoxal phosphate)lysine mark. A pyridoxal 5'-phosphate-binding site is contributed by Thr332.

It belongs to the class-III pyridoxal-phosphate-dependent aminotransferase family. Putrescine aminotransferase subfamily. Pyridoxal 5'-phosphate serves as cofactor.

The enzyme catalyses an alkane-alpha,omega-diamine + 2-oxoglutarate = an omega-aminoaldehyde + L-glutamate. It carries out the reaction putrescine + 2-oxoglutarate = 1-pyrroline + L-glutamate + H2O. The catalysed reaction is cadaverine + 2-oxoglutarate = 5-aminopentanal + L-glutamate. It participates in amine and polyamine degradation; putrescine degradation; 4-aminobutanal from putrescine (transaminase route): step 1/1. Catalyzes the aminotransferase reaction from putrescine to 2-oxoglutarate, leading to glutamate and 4-aminobutanal, which spontaneously cyclizes to form 1-pyrroline. This is the first step in one of two pathways for putrescine degradation, where putrescine is converted into 4-aminobutanoate (gamma-aminobutyrate or GABA) via 4-aminobutanal. Also functions as a cadaverine transaminase in a a L-lysine degradation pathway to succinate that proceeds via cadaverine, glutarate and L-2-hydroxyglutarate. The chain is Putrescine aminotransferase from Escherichia coli (strain SMS-3-5 / SECEC).